We begin with the raw amino-acid sequence, 168 residues long: UPF0262 protein BRADO6636 (168 aa).

Belongs to the UPF0262 family.

The sequence is that of UPF0262 protein BRADO6636 from Bradyrhizobium sp. (strain ORS 278).